The chain runs to 156 residues: Ribonuclease 7 (156 aa).

A signal peptide spans 1-28; that stretch reads MAPARAGFCPLLLLLLLGLWVAEIPVSA. The tract at residues 29–32 is important for antibacterial activity; that stretch reads KPKG. Residue histidine 43 is the Proton acceptor of the active site. DUMP is bound by residues histidine 43, lysine 66, asparagine 69, and threonine 70. Cystine bridges form between cysteine 51/cysteine 109, cysteine 65/cysteine 119, cysteine 83/cysteine 134, and cysteine 90/cysteine 97. Residue asparagine 127 is glycosylated (N-linked (GlcNAc...) asparagine). The segment at 139–140 is important for antibacterial activity; sequence KK. Residues histidine 151 and arginine 154 each contribute to the dUMP site. Residue histidine 151 is the Proton donor of the active site.

Expressed in collecting ducts in kidney, and in apical uroepithelium in bladder (at protein level). Expressed in various epithelial tissues including skin, respiratory tract, genito-urinary tract and, at a low level, in the gut. Expressed in liver, kidney, skeletal muscle and heart.

The protein resides in the secreted. Its function is as follows. Exhibits a potent RNase activity. Has broad-spectrum antimicrobial activity against many pathogenic microorganisms including uropathogenic E.coli (UPEC), and remarkably potent activity (lethal dose of 90% &lt; 30 nM) against a vancomycin resistant Enterococcus faecium. Causes loss of bacterial membrane integrity. Probably contributes to urinary tract sterility. Bactericidal activity is independent of RNase activity. This Homo sapiens (Human) protein is Ribonuclease 7 (RNASE7).